The following is a 126-amino-acid chain: Aspartate 1-decarboxylase (126 aa).

The active-site Schiff-base intermediate with substrate; via pyruvic acid is Ser25. Ser25 is subject to Pyruvic acid (Ser). Thr57 provides a ligand contact to substrate. Residue Tyr58 is the Proton donor of the active site. Gly73 to Ala75 contributes to the substrate binding site.

It belongs to the PanD family. In terms of assembly, heterooctamer of four alpha and four beta subunits. Requires pyruvate as cofactor. In terms of processing, is synthesized initially as an inactive proenzyme, which is activated by self-cleavage at a specific serine bond to produce a beta-subunit with a hydroxyl group at its C-terminus and an alpha-subunit with a pyruvoyl group at its N-terminus.

Its subcellular location is the cytoplasm. It carries out the reaction L-aspartate + H(+) = beta-alanine + CO2. It functions in the pathway cofactor biosynthesis; (R)-pantothenate biosynthesis; beta-alanine from L-aspartate: step 1/1. Catalyzes the pyruvoyl-dependent decarboxylation of aspartate to produce beta-alanine. The chain is Aspartate 1-decarboxylase from Photorhabdus laumondii subsp. laumondii (strain DSM 15139 / CIP 105565 / TT01) (Photorhabdus luminescens subsp. laumondii).